Reading from the N-terminus, the 376-residue chain is Putative glutamate--cysteine ligase 2-1 (376 aa).

Belongs to the glutamate--cysteine ligase type 2 family. YbdK subfamily.

It carries out the reaction L-cysteine + L-glutamate + ATP = gamma-L-glutamyl-L-cysteine + ADP + phosphate + H(+). Functionally, ATP-dependent carboxylate-amine ligase which exhibits weak glutamate--cysteine ligase activity. The polypeptide is Putative glutamate--cysteine ligase 2-1 (Mycobacterium sp. (strain KMS)).